The chain runs to 461 residues: Phosphoglucosamine mutase (461 aa).

S107 (phosphoserine intermediate) is an active-site residue. Positions 107, 254, 256, and 258 each coordinate Mg(2+). A Phosphoserine modification is found at S107.

The protein belongs to the phosphohexose mutase family. Requires Mg(2+) as cofactor. Post-translationally, activated by phosphorylation.

It carries out the reaction alpha-D-glucosamine 1-phosphate = D-glucosamine 6-phosphate. Catalyzes the conversion of glucosamine-6-phosphate to glucosamine-1-phosphate. This is Phosphoglucosamine mutase from Bifidobacterium longum subsp. infantis (strain ATCC 15697 / DSM 20088 / JCM 1222 / NCTC 11817 / S12).